The chain runs to 246 residues: tRNA pseudouridine synthase A (246 aa).

Asp52 (nucleophile) is an active-site residue. Residue Tyr111 coordinates substrate.

It belongs to the tRNA pseudouridine synthase TruA family. In terms of assembly, homodimer.

It catalyses the reaction uridine(38/39/40) in tRNA = pseudouridine(38/39/40) in tRNA. In terms of biological role, formation of pseudouridine at positions 38, 39 and 40 in the anticodon stem and loop of transfer RNAs. This is tRNA pseudouridine synthase A from Borreliella burgdorferi (strain ATCC 35210 / DSM 4680 / CIP 102532 / B31) (Borrelia burgdorferi).